The following is a 416-amino-acid chain: MEPMSNKQDSNSSEGDEKGWPDVPKRKRKNSQCSMKSMSALSVSVPGYIPSYLEKDEPCVVCGDKATGYHYRCITCEGCKGFFRRTIQKNLHPAYSCKYEGCCIIDKITRNQCQLCRFKKCISVGMAMDLVLDDSKRVAKRRLIEENREKRKREEMVRTLQVRPEPDTAEWELIRMATDAHRHTNAQGSSWKQKRKFLSDDIGQGPMVPTSDGDKVDLEAFSEFTKIMTPAITRVVDFAKKLPMFSELPCEDQIILLKGCCMEIMSLRAAVRYDPESETLTLNGEMAVKREQLKNGGLGVVSDAIFDLGKSLAQFNLDDTEVALMQAVLLMSSDRSGLTSLEKIEQCQEAYLLAFEHYINYRKHNIPHFWPKLLMKVTDLRMIGACHASRFLHMKVECSSELFPPLFLEVFEDQEV.

The span at 1-13 (MEPMSNKQDSNSS) shows a compositional bias: polar residues. Residues 1-37 (MEPMSNKQDSNSSEGDEKGWPDVPKRKRKNSQCSMKS) are disordered. Positions 1-58 (MEPMSNKQDSNSSEGDEKGWPDVPKRKRKNSQCSMKSMSALSVSVPGYIPSYLEKDEP) are modulating. The segment covering 15-24 (GDEKGWPDVP) has biased composition (basic and acidic residues). Zn(2+) contacts are provided by Cys59, Cys62, Cys76, Cys79, Cys97, Cys103, Cys113, and Cys116. NR C4-type zinc fingers lie at residues 59 to 79 (CVVC…CEGC) and 97 to 121 (CKYE…FKKC). The nuclear receptor DNA-binding region spans 59-133 (CVVCGDKATG…VGMAMDLVLD (75 aa)). Residues 169-413 (AEWELIRMAT…PPLFLEVFED (245 aa)) enclose the NR LBD domain. Arg234 serves as a coordination point for 3,3',5-triiodo-L-thyronine.

Belongs to the nuclear hormone receptor family. NR1 subfamily.

Its subcellular location is the nucleus. In terms of biological role, nuclear hormone receptor that can act as a repressor or activator of transcription. High affinity receptor for thyroid hormones, including triiodothyronine and thyroxine. This is Thyroid hormone receptor alpha (thra) from Hippoglossus hippoglossus (Atlantic halibut).